Reading from the N-terminus, the 407-residue chain is Phosphopentomutase (407 aa).

Mn(2+)-binding residues include aspartate 10, aspartate 306, histidine 311, aspartate 347, histidine 348, and histidine 359.

It belongs to the phosphopentomutase family. Mn(2+) serves as cofactor.

Its subcellular location is the cytoplasm. The enzyme catalyses 2-deoxy-alpha-D-ribose 1-phosphate = 2-deoxy-D-ribose 5-phosphate. It carries out the reaction alpha-D-ribose 1-phosphate = D-ribose 5-phosphate. Its pathway is carbohydrate degradation; 2-deoxy-D-ribose 1-phosphate degradation; D-glyceraldehyde 3-phosphate and acetaldehyde from 2-deoxy-alpha-D-ribose 1-phosphate: step 1/2. Its function is as follows. Isomerase that catalyzes the conversion of deoxy-ribose 1-phosphate (dRib-1-P) and ribose 1-phosphate (Rib-1-P) to deoxy-ribose 5-phosphate (dRib-5-P) and ribose 5-phosphate (Rib-5-P), respectively. The polypeptide is Phosphopentomutase (Yersinia pestis bv. Antiqua (strain Angola)).